A 178-amino-acid polypeptide reads, in one-letter code: Inorganic pyrophosphatase (178 aa).

The substrate site is built by Lys30, Arg44, and Tyr56. Residues Asp66, Asp71, and Asp103 each coordinate Mg(2+). Tyr142 contributes to the substrate binding site.

This sequence belongs to the PPase family. Homohexamer. Requires Mg(2+) as cofactor.

It is found in the cytoplasm. It catalyses the reaction diphosphate + H2O = 2 phosphate + H(+). Its function is as follows. Catalyzes the hydrolysis of inorganic pyrophosphate (PPi) forming two phosphate ions. This is Inorganic pyrophosphatase from Xanthomonas axonopodis pv. citri (strain 306).